Consider the following 284-residue polypeptide: UPF0761 membrane protein IL2447 (284 aa).

6 consecutive transmembrane segments (helical) span residues 41–61 (MLSL…FPMF), 98–118 (MTAI…SAID), 137–157 (FAVY…GLAA), 178–198 (FVLW…MYQL), 214–234 (VIAA…ITFF), and 247–267 (IPIL…GAVL).

This sequence belongs to the UPF0761 family.

It is found in the cell inner membrane. The chain is UPF0761 membrane protein IL2447 from Idiomarina loihiensis (strain ATCC BAA-735 / DSM 15497 / L2-TR).